The primary structure comprises 230 residues: Large ribosomal subunit protein uL1 (230 aa).

This sequence belongs to the universal ribosomal protein uL1 family. Part of the 50S ribosomal subunit.

Binds directly to 23S rRNA. The L1 stalk is quite mobile in the ribosome, and is involved in E site tRNA release. In terms of biological role, protein L1 is also a translational repressor protein, it controls the translation of the L11 operon by binding to its mRNA. In Nitrosospira multiformis (strain ATCC 25196 / NCIMB 11849 / C 71), this protein is Large ribosomal subunit protein uL1.